The chain runs to 303 residues: uncharacterized protein (303 aa).

This is an uncharacterized protein from Bacillus subtilis (strain 168).